A 461-amino-acid polypeptide reads, in one-letter code: Bifunctional protein HldE (461 aa).

Residues Met1 to Thr311 are ribokinase. Asn191 to Glu194 is a binding site for ATP. The active site involves Asp260. The tract at residues Phe332–Asp461 is cytidylyltransferase.

The protein in the N-terminal section; belongs to the carbohydrate kinase PfkB family. This sequence in the C-terminal section; belongs to the cytidylyltransferase family. In terms of assembly, homodimer.

It catalyses the reaction D-glycero-beta-D-manno-heptose 7-phosphate + ATP = D-glycero-beta-D-manno-heptose 1,7-bisphosphate + ADP + H(+). It carries out the reaction D-glycero-beta-D-manno-heptose 1-phosphate + ATP + H(+) = ADP-D-glycero-beta-D-manno-heptose + diphosphate. It functions in the pathway nucleotide-sugar biosynthesis; ADP-L-glycero-beta-D-manno-heptose biosynthesis; ADP-L-glycero-beta-D-manno-heptose from D-glycero-beta-D-manno-heptose 7-phosphate: step 1/4. Its pathway is nucleotide-sugar biosynthesis; ADP-L-glycero-beta-D-manno-heptose biosynthesis; ADP-L-glycero-beta-D-manno-heptose from D-glycero-beta-D-manno-heptose 7-phosphate: step 3/4. In terms of biological role, catalyzes the phosphorylation of D-glycero-D-manno-heptose 7-phosphate at the C-1 position to selectively form D-glycero-beta-D-manno-heptose-1,7-bisphosphate. Functionally, catalyzes the ADP transfer from ATP to D-glycero-beta-D-manno-heptose 1-phosphate, yielding ADP-D-glycero-beta-D-manno-heptose. The polypeptide is Bifunctional protein HldE (Helicobacter pylori (strain P12)).